The following is a 243-amino-acid chain: Small ribosomal subunit protein uS3 (243 aa).

The region spanning 39–107 (MRKFVMSELK…ETHLNIVEVR (69 aa)) is the KH type-2 domain. The segment at 214-243 (ASERRAMEGDAQGPASRDRDRDRDRRRDNA) is disordered. Over residues 229 to 243 (SRDRDRDRDRRRDNA) the composition is skewed to basic and acidic residues.

Belongs to the universal ribosomal protein uS3 family. Part of the 30S ribosomal subunit. Forms a tight complex with proteins S10 and S14.

Functionally, binds the lower part of the 30S subunit head. Binds mRNA in the 70S ribosome, positioning it for translation. In Rhizobium johnstonii (strain DSM 114642 / LMG 32736 / 3841) (Rhizobium leguminosarum bv. viciae), this protein is Small ribosomal subunit protein uS3.